Here is a 501-residue protein sequence, read N- to C-terminus: tRNA (guanine(37)-N(1))-methyltransferase (501 aa).

Residues His-282, 320–321 (DL), 348–349 (DG), and Asn-380 each bind S-adenosyl-L-methionine. A disordered region spans residues 474-501 (LQNDQEPPLKRQKTGDPFSGEPQIASDS).

This sequence belongs to the class I-like SAM-binding methyltransferase superfamily. TRM5/TYW2 family. In terms of assembly, monomer.

The protein resides in the mitochondrion matrix. The protein localises to the nucleus. It is found in the cytoplasm. It catalyses the reaction guanosine(37) in tRNA + S-adenosyl-L-methionine = N(1)-methylguanosine(37) in tRNA + S-adenosyl-L-homocysteine + H(+). In terms of biological role, involved in mitochondrial tRNA methylation. Specifically methylates the N1 position of guanosine-37 in various tRNAs. Methylation is not dependent on the nature of the nucleoside 5' of the target nucleoside. This is the first step in the biosynthesis of wybutosine (yW), a modified base adjacent to the anticodon of tRNAs and required for accurate decoding. The protein is tRNA (guanine(37)-N(1))-methyltransferase (Trmt5) of Mus musculus (Mouse).